Consider the following 762-residue polypeptide: 5-methyltetrahydropteroyltriglutamate--homocysteine methyltransferase (762 aa).

Residues Arg17 to Lys20 and Lys111 contribute to the 5-methyltetrahydropteroyltri-L-glutamate site. L-homocysteine is bound by residues Ile435–Ser437 and Glu488. L-methionine contacts are provided by residues Ile435 to Ser437 and Glu488. Residues Arg519–Cys520 and Trp565 each bind 5-methyltetrahydropteroyltri-L-glutamate. Asp603 contacts L-homocysteine. Asp603 is a binding site for L-methionine. Glu609 serves as a coordination point for 5-methyltetrahydropteroyltri-L-glutamate. His645, Cys647, and Glu669 together coordinate Zn(2+). The active-site Proton donor is the His698. A Zn(2+)-binding site is contributed by Cys730.

It belongs to the vitamin-B12 independent methionine synthase family. Zn(2+) serves as cofactor.

It carries out the reaction 5-methyltetrahydropteroyltri-L-glutamate + L-homocysteine = tetrahydropteroyltri-L-glutamate + L-methionine. Its pathway is amino-acid biosynthesis; L-methionine biosynthesis via de novo pathway; L-methionine from L-homocysteine (MetE route): step 1/1. In terms of biological role, catalyzes the transfer of a methyl group from 5-methyltetrahydrofolate to homocysteine resulting in methionine formation. This chain is 5-methyltetrahydropteroyltriglutamate--homocysteine methyltransferase, found in Bacillus anthracis (strain A0248).